The chain runs to 458 residues: Secretion-regulating guanine nucleotide exchange factor (458 aa).

7 RCC1 repeats span residues Ala-15–Gly-67, Gly-68–Asn-119, Gly-120–Ser-171, Gly-172–Ala-230, Gly-231–Thr-283, Gly-284–Gly-351, and Val-352–Leu-402. The disordered stretch occupies residues Asp-420–Leu-458. Positions Glu-426–Ser-442 are enriched in basic and acidic residues. Ser-427 carries the post-translational modification Phosphoserine.

As to quaternary structure, interacts with SEC5. The interaction occurs only in the presence of magnesium or manganese and is stimulated by dCTP or GTP.

The protein resides in the cytoplasm. Its subcellular location is the nucleus. In terms of biological role, probable guanine nucleotide exchange factor (GEF), which may be involved in the secretion process. The protein is Secretion-regulating guanine nucleotide exchange factor (SERGEF) of Homo sapiens (Human).